The chain runs to 232 residues: Expansin-YoaJ (232 aa).

Positions 1–25 (MKKIMSAFVGMVLLTIFCFSPQASA) are cleaved as a signal peptide. One can recognise an Expansin-like EG45 domain in the interval 58–127 (ITAINPADLN…MKDGKINIKW (70 aa)).

The protein resides in the secreted. Its subcellular location is the cell wall. Its function is as follows. May promote colonization of plant roots. May cause loosening and extension of plant cell walls by disrupting non-covalent bonding between cellulose microfibrils and matrix glucans. Has very low expansin activity (in vitro). No enzymatic activity has been found. Binds to peptidoglycan and to plant cell walls. The sequence is that of Expansin-YoaJ (yoaJ) from Bacillus subtilis (strain 168).